The sequence spans 773 residues: MQNYQSHSIKVLKGLEGVRKRPGMYIGDTNVGGLHHMVYEVVDNAVDESMAGFCDTINITLTDEGSCIVEDNGRGIPVDIHPTEKIPACTVVLTILHAGGKFDNDTYKVSGGLHGVGVSVVNALSKRLIMTIKKEGQIYRQEFEKGIPTSELEIIGKTKSAKESGTTIEFFPDESVMEVVEFQAGILQKRFKEMAYLNDGLKISFKEEKTQLQETYFYEDGLKQFVKDSAKKELLTPIISFKSMDEETRTSIEVALAYADDYNENTLSFVNNIKTSEGGTHEAGFKMGLSKAILQYIGNNIKTKESRPISEDIKEGLIAVVSLKMSEPLFEGQTKSKLGSSYARALVSKLVYDKIHQFLEENPNEAKIIANKALLAAKAREASKKARELTRKKDNLSVGTLPGKLADCQSKDPLESEIFLVEGDSAGGSAKQGRDRVFQAILPLKGKILNVEKSHLSKILKSEEIKNMITAFGCGIQESFDIERLRYHKIIIMTDADVDGSHIQTLLMTFFYRYLRPLIEQGHVYIAQAPLYKYKKGKTEIYLKDSVALDHFLIEHGINSVDIEGIGKNDLMNLLKVARHYRYALLELEKRYNLLEILRFLIETKDALSLDMKVLEKSILEKLEGLNYQILRSFATEESLHLHTQTPKGLVEFNLDDNLFKEVLFEEANYTYQKLMEYNLDFLENKDILAFLEEVENHAKKGANIQRYKGLGEMNPNDLWETTMHKENRSLIKLKIEDLEKTDAVFSLCMGDEVEPRRAFIQAHAKDVKQLDV.

Positions 416 to 530 constitute a Toprim domain; it reads SEIFLVEGDS…QGHVYIAQAP (115 aa). Mg(2+) is bound by residues glutamate 422, aspartate 495, and aspartate 497.

The protein belongs to the type II topoisomerase GyrB family. In terms of assembly, heterotetramer, composed of two GyrA and two GyrB chains. In the heterotetramer, GyrA contains the active site tyrosine that forms a transient covalent intermediate with DNA, while GyrB binds cofactors and catalyzes ATP hydrolysis. The cofactor is Mg(2+). Mn(2+) serves as cofactor. Requires Ca(2+) as cofactor.

The protein localises to the cytoplasm. The catalysed reaction is ATP-dependent breakage, passage and rejoining of double-stranded DNA.. Its function is as follows. A type II topoisomerase that negatively supercoils closed circular double-stranded (ds) DNA in an ATP-dependent manner to modulate DNA topology and maintain chromosomes in an underwound state. Negative supercoiling favors strand separation, and DNA replication, transcription, recombination and repair, all of which involve strand separation. Also able to catalyze the interconversion of other topological isomers of dsDNA rings, including catenanes and knotted rings. Type II topoisomerases break and join 2 DNA strands simultaneously in an ATP-dependent manner. This chain is DNA gyrase subunit B, found in Helicobacter pylori (strain ATCC 700392 / 26695) (Campylobacter pylori).